The primary structure comprises 202 residues: 7-cyano-7-deazaguanine synthase 1 (202 aa).

Residue 7–17 participates in ATP binding; it reads MSGGLDSSSAA. Zn(2+) contacts are provided by cysteine 166, cysteine 174, cysteine 177, and cysteine 180.

Belongs to the QueC family. Requires Zn(2+) as cofactor.

It catalyses the reaction 7-carboxy-7-deazaguanine + NH4(+) + ATP = 7-cyano-7-deazaguanine + ADP + phosphate + H2O + H(+). It participates in purine metabolism; 7-cyano-7-deazaguanine biosynthesis. Functionally, catalyzes the ATP-dependent conversion of 7-carboxy-7-deazaguanine (CDG) to 7-cyano-7-deazaguanine (preQ(0)). In Sulfurisphaera tokodaii (strain DSM 16993 / JCM 10545 / NBRC 100140 / 7) (Sulfolobus tokodaii), this protein is 7-cyano-7-deazaguanine synthase 1 (queC1).